The chain runs to 393 residues: Pyridinium-3,5-bisthiocarboxylic acid mononucleotide nickel insertion protein (393 aa).

It belongs to the LarC family.

It catalyses the reaction Ni(II)-pyridinium-3,5-bisthiocarboxylate mononucleotide = pyridinium-3,5-bisthiocarboxylate mononucleotide + Ni(2+). Its function is as follows. Involved in the biosynthesis of a nickel-pincer cofactor ((SCS)Ni(II) pincer complex). Binds Ni(2+), and functions in nickel delivery to pyridinium-3,5-bisthiocarboxylic acid mononucleotide (P2TMN), to form the mature cofactor. Is thus probably required for the activation of nickel-pincer cofactor-dependent enzymes. The protein is Pyridinium-3,5-bisthiocarboxylic acid mononucleotide nickel insertion protein of Nocardioides sp. (strain ATCC BAA-499 / JS614).